The chain runs to 82 residues: MVVIRMARGGAKKRSFYRIVVADKRSPRDGRFIEKLGFFNPLAKGGEERLKLDVAKAEAWLAKGAQPSDRVASLIKEAKKAA.

It belongs to the bacterial ribosomal protein bS16 family.

This is Small ribosomal subunit protein bS16 from Francisella tularensis subsp. holarctica (strain FTNF002-00 / FTA).